Reading from the N-terminus, the 432-residue chain is Adenylosuccinate synthetase (432 aa).

Residues 13 to 19 (GDEGKGK) and 41 to 43 (GHT) each bind GTP. Asp-14 acts as the Proton acceptor in catalysis. 2 residues coordinate Mg(2+): Asp-14 and Gly-41. IMP is bound by residues 14-17 (DEGK), 39-42 (NAGH), Thr-130, Arg-144, Gln-225, Thr-240, and Arg-304. Residue His-42 is the Proton donor of the active site. Residue 300–306 (ATTGRRR) participates in substrate binding. GTP contacts are provided by residues Arg-306, 332-334 (KLD), and 415-417 (STG).

This sequence belongs to the adenylosuccinate synthetase family. As to quaternary structure, homodimer. It depends on Mg(2+) as a cofactor.

The protein localises to the cytoplasm. The catalysed reaction is IMP + L-aspartate + GTP = N(6)-(1,2-dicarboxyethyl)-AMP + GDP + phosphate + 2 H(+). Its pathway is purine metabolism; AMP biosynthesis via de novo pathway; AMP from IMP: step 1/2. Functionally, plays an important role in the de novo pathway of purine nucleotide biosynthesis. Catalyzes the first committed step in the biosynthesis of AMP from IMP. The chain is Adenylosuccinate synthetase from Shigella sonnei (strain Ss046).